The primary structure comprises 475 residues: MAAPGWGRWVLGLGPLLLQVFLPFQLVAGRWGPEGAGGGVRRGLAEPSVVAKHEDSLFKDLFQDYERWVRPVEHLNDRIKIKFGLAISQLVDVDEKNQLMTTNVWLKQEWIDVKLRWNPDDYGGIKLIRVPSDSLWTPDIVLFDNADGRFEGASTKTVVRYDGTVTWTPPANYKSSCTIDVTFFPFDLQNCSMKFGSWTYDGSQVDIILEDQDVDKRDFFDNGEWEIVSATGSKGNRTDSCCWYPYITYSFVIKRLPLFYTLFLIIPCIGLSFLTVLVFYLPSNEGEKICLCTSVLVSLTVFLLVIEEIIPSSSKVIPLIGEYLVFTMIFVTLSIMVTVFAINIHHRSSSTHDAMAPWVRKIFLHKLPKLLCMRSHVDRYFSQKEEARSSRGPRSSRNALEAALDSVRYITRHVMKETDVREVVEDWKFIAQVLDRMFLWTFLLVSVVGSLGLFVPVIYKWANIIVPIHIGNENK.

Residues 1–29 form the signal peptide; it reads MAAPGWGRWVLGLGPLLLQVFLPFQLVAG. The Extracellular segment spans residues 30–261; the sequence is RWGPEGAGGG…VIKRLPLFYT (232 aa). A disulfide bond links cysteine 177 and cysteine 191. N-linked (GlcNAc...) asparagine glycans are attached at residues asparagine 190 and asparagine 236. An intrachain disulfide couples cysteine 241 to cysteine 242. Transmembrane regions (helical) follow at residues 262–282, 289–309, and 324–344; these read LFLI…FYLP, ICLC…IEEI, and LVFT…AINI. Topologically, residues 345 to 437 are cytoplasmic; it reads HHRSSSTHDA…KFIAQVLDRM (93 aa). The helical transmembrane segment at 438–458 threads the bilayer; sequence FLWTFLLVSVVGSLGLFVPVI. Residues 459–475 lie on the Extracellular side of the membrane; sequence YKWANIIVPIHIGNENK.

The protein belongs to the ligand-gated ion channel (TC 1.A.9) family. Acetylcholine receptor (TC 1.A.9.1) subfamily. Alpha-5/CHRNA5 sub-subfamily. As to quaternary structure, neuronal AChR that forms heteropentamers composed of two different type of subunits: alpha and non-alpha (beta). CHRNA5/alpha-5 subunit is only able to form functional nAChRs when co-assembled with another alpha subunit, can be combined to CHRNA4/alpha-4 or CHRNA3/alpha-3 and CHRNB4/beta-4 or CHRNB2/beta-2 to give rise to functional receptors. Interacts with LYPD6.

It is found in the synaptic cell membrane. The protein resides in the cell membrane. It catalyses the reaction Ca(2+)(in) = Ca(2+)(out). The enzyme catalyses K(+)(in) = K(+)(out). The catalysed reaction is Na(+)(in) = Na(+)(out). With respect to regulation, activated by a myriad of ligands such as acetylcholine, cytisine, nicotine, choline and epibatidine. Functionally, component of neuronal acetylcholine receptors (nAChRs) that function as pentameric, ligand-gated cation channels with high calcium permeability among other activities. nAChRs are excitatory neurotrasnmitter receptors formed by a collection of nAChR subunits known to mediate synaptic transmission in the nervous system and the neuromuscular junction. Each nAchR subunit confers differential attributes to channel properties, including activation, deactivation and desensitization kinetics, pH sensitivity, cation permeability, and binding to allosteric modulators. Has an accessory rather than functional role and is only able to form functional nAChRs when co-assembled with another beta subunit. Participates in pentameric assemblies along with CHRNA3, CHRNA4, CHRNB2 and CHRNB4. Increases receptor sensitivity to acetylcholine and nicotine when associated with CHRNA4 and CHRNB2. Plays a role in nicotine addiction. This chain is Neuronal acetylcholine receptor subunit alpha-5 (CHRNA5), found in Bos taurus (Bovine).